Consider the following 111-residue polypeptide: Phosphoribosyl-ATP pyrophosphatase (111 aa).

Belongs to the PRA-PH family.

The protein resides in the cytoplasm. The catalysed reaction is 1-(5-phospho-beta-D-ribosyl)-ATP + H2O = 1-(5-phospho-beta-D-ribosyl)-5'-AMP + diphosphate + H(+). Its pathway is amino-acid biosynthesis; L-histidine biosynthesis; L-histidine from 5-phospho-alpha-D-ribose 1-diphosphate: step 2/9. This is Phosphoribosyl-ATP pyrophosphatase from Pseudomonas entomophila (strain L48).